Consider the following 210-residue polypeptide: uncharacterized protein (210 aa).

Residues 1 to 21 (MLKMNVKKALVILVALALVAA) form the signal peptide.

This is an uncharacterized protein from Archaeoglobus fulgidus (strain ATCC 49558 / DSM 4304 / JCM 9628 / NBRC 100126 / VC-16).